The primary structure comprises 229 residues: DNA repair protein RecO (229 aa).

The protein belongs to the RecO family.

Functionally, involved in DNA repair and RecF pathway recombination. This is DNA repair protein RecO from Legionella pneumophila (strain Lens).